A 117-amino-acid chain; its full sequence is Large ribosomal subunit protein bL19 (117 aa).

Belongs to the bacterial ribosomal protein bL19 family.

Functionally, this protein is located at the 30S-50S ribosomal subunit interface and may play a role in the structure and function of the aminoacyl-tRNA binding site. This Shewanella frigidimarina (strain NCIMB 400) protein is Large ribosomal subunit protein bL19.